Consider the following 322-residue polypeptide: MTVTKIEIPTIDLRGYYEPTSPTSKEEVVAQVRAACLEHGFFQIEGHGVSLEVQRNMLAACKTFFDLPTDQKAELSLYKNTWRRGYEGYGEQTPHHAVLPDQKEAFFVGRDLPEDQIGFLKGPNVWPEQVPTNQFRGPVEEYFEALLKLGHRVMEVLVVGMGHPPSILDSFTGNAAMFLKLLRYPEHTFTDPRVFGSGAHTDYGGLTILLQDPGKHGLEVYHAATEQWIPVPAVEDRFVINLGDMVQRWTDGEYKSNLHRVLNKASGERFAVPAFWHGDLEATNPLNPNDTSGETVQDFIRKKFYRDYSLPLAEEKGTAVAV.

In terms of domain architecture, Fe2OG dioxygenase spans 172 to 279; sequence TGNAAMFLKL…FAVPAFWHGD (108 aa). Residues H200, D202, and H259 each coordinate Fe cation. R269 is a binding site for 2-oxoglutarate.

It belongs to the iron/ascorbate-dependent oxidoreductase family. Fe(2+) serves as cofactor.

Its pathway is secondary metabolite biosynthesis. 2-oxoglutarate-dependent dioxygenase; part of the gene cluster that produces the acyltetronic acid derivatives carlosic acid, agglomerin F and carlosic acid methyl ether. CaaD catalyzes the sequential oxidations of the terminal C-10 methyl group of the caaC product to form carboxylic acid which is necessary for the biosynthesis of agglomerin F. The protein is 2-oxoglutarate-dependent dioxygenase caaD of Aspergillus niger (strain ATCC MYA-4892 / CBS 513.88 / FGSC A1513).